The sequence spans 309 residues: Sporulation sigma-E factor-processing peptidase (309 aa).

5 consecutive transmembrane segments (helical) span residues 7-27, 36-55, 61-78, 88-105, and 130-147; these read VIWL…AFIL, LVGG…TPFS, PAGK…TFGF, LFSF…IIGA, and PISW…WFFS. Residue aspartate 183 is part of the active site.

The protein belongs to the peptidase U4 family. Self-associates. Interacts with SigE. Interacts with SpoIIR.

It is found in the cell membrane. Functionally, probable aspartic protease that is responsible for the proteolytic cleavage of the RNA polymerase sigma E factor (SigE/spoIIGB) to yield the active peptide in the mother cell during sporulation. Responds to a signal from the forespore that is triggered by the extracellular signal protein SpoIIR. In Bacillus subtilis (strain 168), this protein is Sporulation sigma-E factor-processing peptidase (spoIIGA).